An 842-amino-acid polypeptide reads, in one-letter code: Microcephalin (842 aa).

The BRCT 1 domain occupies 1–93 (MAAPILKDVV…AHIDESLFPA (93 aa)). 4 positions are modified to phosphoserine: serine 279, serine 287, serine 296, and serine 333. The residue at position 335 (threonine 335) is a Phosphothreonine. The span at 346–359 (HSRPRSSSVKRKRV) shows a compositional bias: basic residues. Disordered stretches follow at residues 346 to 375 (HSRP…KRKR), 418 to 443 (PDNL…AQFS), and 563 to 624 (VGLK…PTRR). Polar residues-rich tracts occupy residues 434–443 (QLPSNPAQFS) and 566–582 (KSTQ…NSSE). Residues 586-608 (PSEHEPRSVVDCNVERSAEEKEN) are compositionally biased toward basic and acidic residues. BRCT domains lie at 647 to 737 (SGKG…PFEL) and 758 to 840 (YRGT…NYLL).

Interacts with CDC27 and maybe other components of the APC/C complex. Interacts with histone variant H2AX under DNA damage conditions.

It localises to the cytoplasm. The protein resides in the cytoskeleton. Its subcellular location is the microtubule organizing center. It is found in the centrosome. Its function is as follows. Implicated in chromosome condensation and DNA damage induced cellular responses. May play a role in neurogenesis and regulation of the size of the cerebral cortex. The chain is Microcephalin from Macaca fascicularis (Crab-eating macaque).